Reading from the N-terminus, the 276-residue chain is Small ribosomal subunit protein uS3 (276 aa).

The KH type-2 domain occupies 39-110; sequence IRRETMKFFK…KINIKIKEIK (72 aa). Positions 218 to 243 are disordered; the sequence is DAGQVINRKSSREKSEHFDRSRVDDR. Positions 227–243 are enriched in basic and acidic residues; it reads SSREKSEHFDRSRVDDR.

The protein belongs to the universal ribosomal protein uS3 family. Part of the 30S ribosomal subunit. Forms a tight complex with proteins S10 and S14.

Binds the lower part of the 30S subunit head. Binds mRNA in the 70S ribosome, positioning it for translation. The protein is Small ribosomal subunit protein uS3 of Borrelia hermsii (strain HS1 / DAH).